Reading from the N-terminus, the 140-residue chain is Oocyte-expressed protein homolog (140 aa).

The KH; atypical domain maps to 40–101 (PLVFFLEAWL…AVQRQVKSVL (62 aa)).

Belongs to the KHDC1 family. Component of the subcortical maternal complex (SCMC), at least composed of NLRP5, KHDC3, OOEP, and TLE6. Within the complex, interacts with NLRP5, KHDC3 and TLE6. As part of the SCMC interacts with the SCMC-associated protein NLRP4F. The SCMC may facilitate translocation of its components between the nuclear and cytoplasmic compartments. Forms a scaffold complex with KHDC3/FILIA, and interacts with BLM and TRIM25 at DNA replication forks.

The protein localises to the cytoplasm. It is found in the nucleus. In terms of biological role, component of the subcortical maternal complex (SCMC), a multiprotein complex that plays a key role in early embryonic development. The SCMC complex is a structural constituent of cytoplasmic lattices, which consist in fibrous structures found in the cytoplasm of oocytes and preimplantation embryos. They are required to store maternal proteins critical for embryonic development, such as proteins that control epigenetic reprogramming of the preimplantation embryo, and prevent their degradation or activation. As part of the OOEP-KHDC3 scaffold, recruits BLM and TRIM25 to DNA replication forks, thereby promoting the ubiquitination of BLM by TRIM25, enhancing BLM retainment at replication forks and therefore promoting stalled replication fork restart. Positively regulates the homologous recombination-mediated DNA double-strand break (DSB) repair pathway by regulating ATM activation and RAD51 recruitment to DSBs in oocytes. Thereby contributes to oocyte survival and the resumption and completion of meiosis. In Bos taurus (Bovine), this protein is Oocyte-expressed protein homolog (OOEP).